We begin with the raw amino-acid sequence, 287 residues long: 4-hydroxybenzoate octaprenyltransferase (287 aa).

9 helical membrane-spanning segments follow: residues 20 to 40, 43 to 63, 94 to 114, 115 to 135, 137 to 157, 159 to 179, 210 to 230, 235 to 255, and 266 to 286; these read IGSLLLLWPTLWALFLAADGL, MHVLVVFVLGVVFMRAAGCVI, LGLFGLLVLVSFVLVLTMNTL, TIMLSVVGLVLAAAYPFMKRY, HLPQLVLGMAFGWSIPMAYAA, AGELPVVAWLLFTANILWTIA, IIIGVLQLSTLVTMILIGHSL, IYYWFLLMASGLFVYQQRLIG, and FLNNNYVGMLIFLGIAISVMM.

This sequence belongs to the UbiA prenyltransferase family. Mg(2+) is required as a cofactor.

The protein localises to the cell inner membrane. The catalysed reaction is all-trans-octaprenyl diphosphate + 4-hydroxybenzoate = 4-hydroxy-3-(all-trans-octaprenyl)benzoate + diphosphate. The protein operates within cofactor biosynthesis; ubiquinone biosynthesis. Functionally, catalyzes the prenylation of para-hydroxybenzoate (PHB) with an all-trans polyprenyl group. Mediates the second step in the final reaction sequence of ubiquinone-8 (UQ-8) biosynthesis, which is the condensation of the polyisoprenoid side chain with PHB, generating the first membrane-bound Q intermediate 3-octaprenyl-4-hydroxybenzoate. The chain is 4-hydroxybenzoate octaprenyltransferase from Photobacterium profundum (strain SS9).